The sequence spans 504 residues: Cytochrome P450 4A2 (504 aa).

The propeptide occupies 1 to 4 (MGFS). Glutamate 315 is a binding site for heme. Serine 434 bears the Phosphoserine mark. Cysteine 451 contributes to the heme binding site.

This sequence belongs to the cytochrome P450 family. The cofactor is heme.

The protein resides in the endoplasmic reticulum membrane. The protein localises to the microsome membrane. It catalyses the reaction an omega-methyl-long-chain fatty acid + reduced [NADPH--hemoprotein reductase] + O2 = an omega-hydroxy-long-chain fatty acid + oxidized [NADPH--hemoprotein reductase] + H2O + H(+). The enzyme catalyses dodecanoate + reduced [NADPH--hemoprotein reductase] + O2 = (11R)-hydroxydodecanoate + oxidized [NADPH--hemoprotein reductase] + H2O + H(+). The catalysed reaction is dodecanoate + reduced [NADPH--hemoprotein reductase] + O2 = 12-hydroxydodecanoate + oxidized [NADPH--hemoprotein reductase] + H2O + H(+). It carries out the reaction tetradecanoate + reduced [NADPH--hemoprotein reductase] + O2 = 14-hydroxytetradecanoate + oxidized [NADPH--hemoprotein reductase] + H2O + H(+). It catalyses the reaction hexadecanoate + reduced [NADPH--hemoprotein reductase] + O2 = 16-hydroxyhexadecanoate + oxidized [NADPH--hemoprotein reductase] + H2O + H(+). It functions in the pathway lipid metabolism; fatty acid metabolism. In terms of biological role, a cytochrome P450 monooxygenase that catalyzes omega and omega-1 hydroxylation of saturated fatty acids. Exhibits preferential omega versus omega-1 regioselectivity and (R) versus (S) stereoselectivity for hydroxylation of lauric and myristic acids. Has low activity toward palmitic acid. Mechanistically, uses molecular oxygen inserting one oxygen atom into a substrate, and reducing the second into a water molecule, with two electrons provided by NADPH via cytochrome P450 reductase (CPR; NADPH-ferrihemoprotein reductase). This chain is Cytochrome P450 4A2, found in Rattus norvegicus (Rat).